The sequence spans 459 residues: Argininosuccinate lyase (459 aa).

This sequence belongs to the lyase 1 family. Argininosuccinate lyase subfamily.

Its subcellular location is the cytoplasm. It carries out the reaction 2-(N(omega)-L-arginino)succinate = fumarate + L-arginine. The protein operates within amino-acid biosynthesis; L-arginine biosynthesis; L-arginine from L-ornithine and carbamoyl phosphate: step 3/3. The protein is Argininosuccinate lyase of Staphylococcus saprophyticus subsp. saprophyticus (strain ATCC 15305 / DSM 20229 / NCIMB 8711 / NCTC 7292 / S-41).